Here is a 345-residue protein sequence, read N- to C-terminus: 4-hydroxy-2-oxovalerate aldolase (345 aa).

Residues 8-260 (ITVHDMTLRD…ETGVDVFKIQ (253 aa)) enclose the Pyruvate carboxyltransferase domain. 16-17 (RD) contacts substrate. D17 serves as a coordination point for Mn(2+). The active-site Proton acceptor is H20. Substrate-binding residues include S170 and H199. Residues H199 and H201 each coordinate Mn(2+). Residue Y290 participates in substrate binding.

The protein belongs to the 4-hydroxy-2-oxovalerate aldolase family.

The catalysed reaction is (S)-4-hydroxy-2-oxopentanoate = acetaldehyde + pyruvate. This is 4-hydroxy-2-oxovalerate aldolase from Leptothrix cholodnii (strain ATCC 51168 / LMG 8142 / SP-6) (Leptothrix discophora (strain SP-6)).